Consider the following 287-residue polypeptide: Urease accessory protein UreD (287 aa).

This sequence belongs to the UreD family. In terms of assembly, ureD, UreF and UreG form a complex that acts as a GTP-hydrolysis-dependent molecular chaperone, activating the urease apoprotein by helping to assemble the nickel containing metallocenter of UreC. The UreE protein probably delivers the nickel.

The protein resides in the cytoplasm. Required for maturation of urease via the functional incorporation of the urease nickel metallocenter. This chain is Urease accessory protein UreD, found in Herpetosiphon aurantiacus (strain ATCC 23779 / DSM 785 / 114-95).